Consider the following 238-residue polypeptide: Histone deacetylase 7 (238 aa).

Disordered regions lie at residues 1 to 26 (TPGS…PEPA) and 47 to 72 (QQQR…GQQE). The segment at 58–158 (SMDPPLPELQ…LPTEPPEHFP (101 aa)) is interaction with MEF2A. Phosphoserine occurs at positions 118 and 164. The tract at residues 145–238 (PVPSLPTEPP…NPALGSEADG (94 aa)) is disordered. The span at 176 to 190 (KSLERRKNPLLRKES) shows a compositional bias: basic and acidic residues. Serine 190 is subject to Phosphoserine; by PKD/PRKD2. A compositionally biased stretch (low complexity) spans 206–221 (SSPSSSSTPASGCSSP).

The protein belongs to the histone deacetylase family. HD type 2 subfamily. As to quaternary structure, interacts with HDAC1, HDAC2, HDAC3, HDAC4, HDAC5, NCOR1, NCOR2, SIN3A, SIN3B, RBBP4, RBBP7, MTA1L1, SAP30 and MBD3. Interacts with KAT5 and EDNRA. Interacts with the 14-3-3 protein YWHAE, MEF2A, MEF2B and MEF2C. Interacts with ZMYND15. Interacts with KDM5B. Interacts with PML. Interacts with FOXP3. Interacts with RARA. May be phosphorylated by CaMK1. Phosphorylated by the PKC kinases PKN1 and PKN2, impairing nuclear import. Phosphorylation at Ser-164 by MARK2, MARK3 and PRKD1 promotes interaction with 14-3-3 proteins and export from the nucleus. Phosphorylation at Ser-164 is a prerequisite for phosphorylation at Ser-190.

It is found in the nucleus. Its subcellular location is the cytoplasm. The enzyme catalyses N(6)-acetyl-L-lysyl-[histone] + H2O = L-lysyl-[histone] + acetate. It carries out the reaction N(6)-acetyl-L-lysyl-[protein] + H2O = L-lysyl-[protein] + acetate. Functionally, responsible for the deacetylation of lysine residues on the N-terminal part of the core histones (H2A, H2B, H3 and H4). Histone deacetylation gives a tag for epigenetic repression and plays an important role in transcriptional regulation, cell cycle progression and developmental events. Histone deacetylases act via the formation of large multiprotein complexes. Involved in muscle maturation by repressing transcription of myocyte enhancer factors such as MEF2A, MEF2B and MEF2C. During muscle differentiation, it shuttles into the cytoplasm, allowing the expression of myocyte enhancer factors. May be involved in Epstein-Barr virus (EBV) latency, possibly by repressing the viral BZLF1 gene. Positively regulates the transcriptional repressor activity of FOXP3. Serves as a corepressor of RARA, causing its deacetylation and inhibition of RARE DNA element binding. In association with RARA, plays a role in the repression of microRNA-10a and thereby in the inflammatory response. Also acetylates non-histone proteins, such as ALKBH5. The chain is Histone deacetylase 7 (Hdac7) from Rattus norvegicus (Rat).